Consider the following 352-residue polypeptide: GTPase Obg (352 aa).

Residues 1–159 enclose the Obg domain; the sequence is MHFLDQAKIY…MWVWLRLKLL (159 aa). In terms of domain architecture, OBG-type G spans 160-327; it reads ADVGLLGLPN…LLDAVLGYLP (168 aa). GTP-binding positions include 166–173, 191–195, 212–215, 279–282, and 308–310; these read GLPNAGKS, FTTLV, DIPG, NKLD, and SGA. Mg(2+) contacts are provided by Ser-173 and Thr-193. Positions 329-352 are disordered; it reads STSTETKGSEVEEVDEEGGEWSPI. The span at 339 to 352 shows a compositional bias: acidic residues; the sequence is VEEVDEEGGEWSPI.

The protein belongs to the TRAFAC class OBG-HflX-like GTPase superfamily. OBG GTPase family. In terms of assembly, monomer. Mg(2+) is required as a cofactor.

Its subcellular location is the cytoplasm. Its function is as follows. An essential GTPase which binds GTP, GDP and possibly (p)ppGpp with moderate affinity, with high nucleotide exchange rates and a fairly low GTP hydrolysis rate. Plays a role in control of the cell cycle, stress response, ribosome biogenesis and in those bacteria that undergo differentiation, in morphogenesis control. This Erythrobacter litoralis (strain HTCC2594) protein is GTPase Obg.